We begin with the raw amino-acid sequence, 217 residues long: MKAYQRQFIEFALEKQVLKFGEFTLKSGRKSPYFFNAGLFNSGRDLARLGRFYAAALMDGGIEFDVLFGPAYKGIPIASATAVQLVEQHDVDVPWCFNRKEAKDHGEGGNLVGSPLKGRIMLVDDVITAGTAIRESMDLIQANGASLAGVLIALDRQEKGKGELSAIQEVERDYGAHIIAIIQMGDLIAYLEEKQAEQPELAVQLAAMQAYRAQYGI.

K26 lines the 5-phospho-alpha-D-ribose 1-diphosphate pocket. 34–35 (FF) serves as a coordination point for orotate. Residues 72-73 (YK), R99, K100, K103, H105, and 124-132 (DDVITAGTA) each bind 5-phospho-alpha-D-ribose 1-diphosphate. Orotate-binding residues include T128 and R156.

This sequence belongs to the purine/pyrimidine phosphoribosyltransferase family. PyrE subfamily. As to quaternary structure, homodimer. The cofactor is Mg(2+).

It catalyses the reaction orotidine 5'-phosphate + diphosphate = orotate + 5-phospho-alpha-D-ribose 1-diphosphate. Its pathway is pyrimidine metabolism; UMP biosynthesis via de novo pathway; UMP from orotate: step 1/2. Catalyzes the transfer of a ribosyl phosphate group from 5-phosphoribose 1-diphosphate to orotate, leading to the formation of orotidine monophosphate (OMP). The polypeptide is Orotate phosphoribosyltransferase (Aeromonas salmonicida (strain A449)).